A 184-amino-acid polypeptide reads, in one-letter code: Protein PPLZ12 (184 aa).

This is Protein PPLZ12 (PPLZ12) from Lupinus polyphyllus (Large-leaved lupine).